A 242-amino-acid chain; its full sequence is Cytochrome c oxidase subunit 2 (242 aa).

The Mitochondrial intermembrane portion of the chain corresponds to 1 to 30; it reads MSFYGSRYFGDIVHGELGKDLFRYHGFVMM. Residues 31-47 form a helical membrane-spanning segment; that stretch reads VAVAVLVFVMYMGCVIL. The Mitochondrial matrix segment spans residues 48–66; it reads FTKFSYRHFLNRQRLEFWW. Residues 67-83 form a helical membrane-spanning segment; the sequence is TIVPMLMLVGLWXPSMI. Over 84–242 the chain is Mitochondrial intermembrane; that stretch reads NLYYMEEVKR…YFVMWLEALN (159 aa). Cu cation-binding residues include His-176, Cys-211, Glu-213, Cys-215, His-219, and Met-222. Glu-213 is a binding site for Mg(2+).

It belongs to the cytochrome c oxidase subunit 2 family. As to quaternary structure, component of the cytochrome c oxidase (complex IV, CIV), a multisubunit enzyme composed of a catalytic core of 3 subunits and several supernumerary subunits. The complex exists as a monomer or a dimer and forms supercomplexes (SCs) in the inner mitochondrial membrane with ubiquinol-cytochrome c oxidoreductase (cytochrome b-c1 complex, complex III, CIII). Cu cation is required as a cofactor.

The protein resides in the mitochondrion inner membrane. The enzyme catalyses 4 Fe(II)-[cytochrome c] + O2 + 8 H(+)(in) = 4 Fe(III)-[cytochrome c] + 2 H2O + 4 H(+)(out). Functionally, component of the cytochrome c oxidase, the last enzyme in the mitochondrial electron transport chain which drives oxidative phosphorylation. The respiratory chain contains 3 multisubunit complexes succinate dehydrogenase (complex II, CII), ubiquinol-cytochrome c oxidoreductase (cytochrome b-c1 complex, complex III, CIII) and cytochrome c oxidase (complex IV, CIV), that cooperate to transfer electrons derived from NADH and succinate to molecular oxygen, creating an electrochemical gradient over the inner membrane that drives transmembrane transport and the ATP synthase. Cytochrome c oxidase is the component of the respiratory chain that catalyzes the reduction of oxygen to water. Electrons originating from reduced cytochrome c in the intermembrane space (IMS) are transferred via the dinuclear copper A center (CU(A)) of subunit 2 and heme A of subunit 1 to the active site in subunit 1, a binuclear center (BNC) formed by heme A3 and copper B (CU(B)). The BNC reduces molecular oxygen to 2 water molecules using 4 electrons from cytochrome c in the IMS and 4 protons from the mitochondrial matrix. In Mytilus edulis (Blue mussel), this protein is Cytochrome c oxidase subunit 2 (COII).